We begin with the raw amino-acid sequence, 79 residues long: uncharacterized protein (79 aa).

Residues 53 to 73 (LFFAYMVAYIGFGILSIGMIV) traverse the membrane as a helical segment.

Its subcellular location is the membrane. This is an uncharacterized protein from Escherichia coli O157:H7.